A 1119-amino-acid chain; its full sequence is Translation initiation factor IF-2 (1119 aa).

2 disordered regions span residues 64–463 and 477–507; these read SIKK…TSGY and RPKK…RQRQ. The span at 70–102 shows a compositional bias: basic and acidic residues; the sequence is IKKDNYKQNKEDKSSLISSVEEKPFKDNPEKKP. Composition is skewed to polar residues over residues 116-153 and 182-212; these read IISN…QNLN and KNTT…KPDQ. Positions 213 to 224 are enriched in low complexity; sequence NSSKSKTKNINN. Composition is skewed to polar residues over residues 242 to 257, 281 to 297, 319 to 328, and 375 to 387; these read NKQN…QTVP, FNRQ…SSNK, FNRQVNTNRS, and QVIN…NSET. Residues 421–435 show a composition bias toward basic and acidic residues; it reads GKTDWDDSAKLEALR. Residues 493 to 507 show a composition bias toward basic residues; the sequence is KQFKKKKKETTRQRQ. The 173-residue stretch at 610–782 folds into the tr-type G domain; the sequence is KRPPVITVMG…ILLVSEVEDL (173 aa). The G1 stretch occupies residues 619–626; the sequence is GHVDHGKT. Position 619-626 (619-626) interacts with GTP; the sequence is GHVDHGKT. The G2 stretch occupies residues 644–648; it reads GITQH. Positions 669 to 672 are G3; the sequence is DTPG. Residues 669-673 and 723-726 contribute to the GTP site; these read DTPGH and NKID. Residues 723-726 are G4; that stretch reads NKID. Residues 759–761 form a G5 region; the sequence is SAI.

It belongs to the TRAFAC class translation factor GTPase superfamily. Classic translation factor GTPase family. IF-2 subfamily.

The protein localises to the cytoplasm. Its function is as follows. One of the essential components for the initiation of protein synthesis. Protects formylmethionyl-tRNA from spontaneous hydrolysis and promotes its binding to the 30S ribosomal subunits. Also involved in the hydrolysis of GTP during the formation of the 70S ribosomal complex. In Prochlorococcus marinus (strain MIT 9215), this protein is Translation initiation factor IF-2.